The primary structure comprises 351 residues: Divinyl chlorophyll a/b light-harvesting protein PcbC (351 aa).

6 helical membrane passes run 27-47, 64-84, 89-109, 203-223, 244-264, and 306-326; these read FIAA…AFTL, LICL…GVIT, CTVI…GGLL, VMGG…FHIA, VLSY…FWCA, and LSNV…WHAL.

Belongs to the PsbB/PsbC family. IsiA/Pcb subfamily. In terms of assembly, the antenna complex consists of divinyl chlorophylls (a and b) and divinyl chlorophyll a/b binding proteins and binds more divinyl chlorophyll b than does the antenna complex from high-light-adapted Prochlorococcus. The cofactor is divinyl chlorophyll a. It depends on divinyl chlorophyll b as a cofactor.

It is found in the cellular thylakoid membrane. Its function is as follows. The antenna complex functions as a light receptor, it captures and delivers excitation energy to photosystems II and I. The Prochlorales pcb genes are not related to higher plant LHCs. The chain is Divinyl chlorophyll a/b light-harvesting protein PcbC (pcbC) from Prochlorococcus marinus (strain SARG / CCMP1375 / SS120).